Here is a 93-residue protein sequence, read N- to C-terminus: uncharacterized protein (93 aa).

Residues 25-68 are a coiled coil; sequence DIKKLSQVKSELEQGKALLEEEKKELIEKNSNLNLQISNMNHLK.

This is an uncharacterized protein from Dictyostelium discoideum (Social amoeba).